The primary structure comprises 191 residues: tRNA-specific adenosine deaminase 2 (191 aa).

A CMP/dCMP-type deaminase domain is found at 20 to 145 (EETEKWMEQA…SVLDIASADL (126 aa)). Histidine 71 serves as a coordination point for Zn(2+). Glutamate 73 (proton donor) is an active-site residue. Cysteine 107 and cysteine 110 together coordinate Zn(2+).

It belongs to the cytidine and deoxycytidylate deaminase family. ADAT2 subfamily. Requires Zn(2+) as cofactor.

The enzyme catalyses adenosine(34) in tRNA + H2O + H(+) = inosine(34) in tRNA + NH4(+). Probably participates in deamination of adenosine-34 to inosine in many tRNAs. The chain is tRNA-specific adenosine deaminase 2 (DEADC1) from Bos taurus (Bovine).